We begin with the raw amino-acid sequence, 347 residues long: MEFCVLFGGASFEHEISIVSAIALKEALKGRIKYFIFLDENHHFYLIEESNMHSKYFAQIKEKKLPPLILTCNGLLKNSFLGAKIIELPLVINLVHGGDGEDGKLASLLEFYRIAFIGPGIEASVLSYNKYLTKLYAKDLGVKALDHVLLNEKNRANALNLIGFNFPFIIKPSNAGSSLGVSVVKEEKELIYALDGAFEYSKEILIEPFIQGVKEYNLAGCKIKKDFCFSYVEEPNKQEFLDFKQKYLDFSRNKAPKANLSNALEEQLKENFKKLYNDLFDGALIRCDFFVIENEVYLNEINPIPGSLANYLFDDFKTTLENLAQSLPKTPKIQIKNSYLLQIQKNK.

Residues 134-332 (KLYAKDLGVK…LAQSLPKTPK (199 aa)) enclose the ATP-grasp domain. 161-216 (LIGFNFPFIIKPSNAGSSLGVSVVKEEKELIYALDGAFEYSKEILIEPFIQGVKEY) contributes to the ATP binding site. Residues Asp288, Glu300, and Asn302 each coordinate Mg(2+).

This sequence belongs to the D-alanine--D-alanine ligase family. The cofactor is Mg(2+). Mn(2+) is required as a cofactor.

Its subcellular location is the cytoplasm. It catalyses the reaction 2 D-alanine + ATP = D-alanyl-D-alanine + ADP + phosphate + H(+). It functions in the pathway cell wall biogenesis; peptidoglycan biosynthesis. Its function is as follows. Cell wall formation. The chain is D-alanine--D-alanine ligase from Helicobacter pylori (strain Shi470).